The following is a 165-amino-acid chain: MKNKLIAKSLLAIAAIGITTTTIASTADASEGYGPREKKPVSINHNIVEYNDGTFKYQSRPKFNTTPKYIKFRHDYNIVEYNDGTFEYGARPQFNKPAAKTEATIKKEQKLIQAQNLVREFEKTHTVSAHRKAQKAVNLVSFEYNVKKMILQERIDQVLKQGLVR.

An N-terminal signal peptide occupies residues 1–29 (MKNKLIAKSLLAIAAIGITTTTIASTADA).

As to quaternary structure, interacts with host fibrinogen alpha chain/FGA. Interacts with host complement protein C3.

It is found in the secreted. Functionally, extracellular fibrinogen-binding protein that plays an important role in virulence. By interacting with the alpha chain of fibrinogen and its derivative fibrin, enhances a non-functional interaction between fibrinogen and platelets and is responsible for repression of fibrinogen-dependent platelet aggregation. In addition, assembles a fibrinogen protective shield around the bacteria which results in impaired phagocytic clearance by the host. Mechanistically, interacts with host complement C3b deposited on the surface of the bacterium via its C-terminal and then recruits fibrinogen via its N-terminal. The polypeptide is Fibrinogen-binding protein (fib) (Staphylococcus aureus (strain MRSA252)).